We begin with the raw amino-acid sequence, 348 residues long: Dihydroorotase (348 aa).

Residues His-17 and His-19 each contribute to the Zn(2+) site. Residues 19–21 (HLR) and Asn-45 each bind substrate. Zn(2+) is bound by residues Lys-103, His-140, and His-178. The residue at position 103 (Lys-103) is an N6-carboxylysine. His-140 contacts substrate. A substrate-binding site is contributed by Leu-223. A Zn(2+)-binding site is contributed by Asp-251. The active site involves Asp-251. Residues His-255 and Ala-267 each contribute to the substrate site.

It belongs to the metallo-dependent hydrolases superfamily. DHOase family. Class II DHOase subfamily. As to quaternary structure, homodimer. It depends on Zn(2+) as a cofactor.

It carries out the reaction (S)-dihydroorotate + H2O = N-carbamoyl-L-aspartate + H(+). Its pathway is pyrimidine metabolism; UMP biosynthesis via de novo pathway; (S)-dihydroorotate from bicarbonate: step 3/3. Its function is as follows. Catalyzes the reversible cyclization of carbamoyl aspartate to dihydroorotate. The polypeptide is Dihydroorotase (Escherichia coli (strain UTI89 / UPEC)).